The chain runs to 277 residues: Phosphatidylglycerol--prolipoprotein diacylglyceryl transferase (277 aa).

Transmembrane regions (helical) follow at residues 11–31, 55–75, 93–113, and 117–137; these read IIFSIGSFKAHWYGFMYLISF, LLYIIFISSCIGGRIGYIIFY, GGMSFHGGLIGAIIAMYYLSL, and VKILKISDFIVPLVPFGLGAG. Arg138 is an a 1,2-diacyl-sn-glycero-3-phospho-(1'-sn-glycerol) binding site. The next 3 helical transmembrane spans lie at 192–212, 220–240, and 256–276; these read PSQLYEFFLEGIFLFFIIYFF, GSISALFLISYGILRIISEFF, and MGQILSIPMIIIGVLYVNLFI.

Belongs to the Lgt family.

The protein resides in the cell inner membrane. The enzyme catalyses L-cysteinyl-[prolipoprotein] + a 1,2-diacyl-sn-glycero-3-phospho-(1'-sn-glycerol) = an S-1,2-diacyl-sn-glyceryl-L-cysteinyl-[prolipoprotein] + sn-glycerol 1-phosphate + H(+). It participates in protein modification; lipoprotein biosynthesis (diacylglyceryl transfer). Functionally, catalyzes the transfer of the diacylglyceryl group from phosphatidylglycerol to the sulfhydryl group of the N-terminal cysteine of a prolipoprotein, the first step in the formation of mature lipoproteins. The sequence is that of Phosphatidylglycerol--prolipoprotein diacylglyceryl transferase from Buchnera aphidicola subsp. Schizaphis graminum (strain Sg).